Consider the following 873-residue polypeptide: Bifunctional uridylyltransferase/uridylyl-removing enzyme (873 aa).

Positions 1–332 (MPYQCPITFN…NGGQTQEAEI (332 aa)) are uridylyltransferase. Residues 333–692 (LDNDFQRRGS…ISKKATRGGT (360 aa)) form a uridylyl-removing region. The HD domain occupies 451–573 (VDEHSIRLLK…VRDEESLELL (123 aa)). ACT domains lie at 693-777 (EVFV…RTPR) and 800-873 (LMEL…ELAP).

The protein belongs to the GlnD family. The cofactor is Mg(2+).

It carries out the reaction [protein-PII]-L-tyrosine + UTP = [protein-PII]-uridylyl-L-tyrosine + diphosphate. It catalyses the reaction [protein-PII]-uridylyl-L-tyrosine + H2O = [protein-PII]-L-tyrosine + UMP + H(+). With respect to regulation, uridylyltransferase (UTase) activity is inhibited by glutamine, while glutamine activates uridylyl-removing (UR) activity. Modifies, by uridylylation and deuridylylation, the PII regulatory proteins (GlnB and homologs), in response to the nitrogen status of the cell that GlnD senses through the glutamine level. Under low glutamine levels, catalyzes the conversion of the PII proteins and UTP to PII-UMP and PPi, while under higher glutamine levels, GlnD hydrolyzes PII-UMP to PII and UMP (deuridylylation). Thus, controls uridylylation state and activity of the PII proteins, and plays an important role in the regulation of nitrogen assimilation and metabolism. This is Bifunctional uridylyltransferase/uridylyl-removing enzyme from Vibrio atlanticus (strain LGP32) (Vibrio splendidus (strain Mel32)).